Here is a 72-residue protein sequence, read N- to C-terminus: UPF0270 protein YheU (72 aa).

Belongs to the UPF0270 family.

This is UPF0270 protein YheU from Salmonella dublin (strain CT_02021853).